We begin with the raw amino-acid sequence, 319 residues long: Biotin synthase (319 aa).

Residues isoleucine 44–arginine 273 enclose the Radical SAM core domain. [4Fe-4S] cluster contacts are provided by cysteine 62, cysteine 66, and cysteine 69. The [2Fe-2S] cluster site is built by serine 106, cysteine 138, cysteine 198, and arginine 268.

The protein belongs to the radical SAM superfamily. Biotin synthase family. In terms of assembly, homodimer. Requires [4Fe-4S] cluster as cofactor. [2Fe-2S] cluster is required as a cofactor.

It carries out the reaction (4R,5S)-dethiobiotin + (sulfur carrier)-SH + 2 reduced [2Fe-2S]-[ferredoxin] + 2 S-adenosyl-L-methionine = (sulfur carrier)-H + biotin + 2 5'-deoxyadenosine + 2 L-methionine + 2 oxidized [2Fe-2S]-[ferredoxin]. It functions in the pathway cofactor biosynthesis; biotin biosynthesis; biotin from 7,8-diaminononanoate: step 2/2. In terms of biological role, catalyzes the conversion of dethiobiotin (DTB) to biotin by the insertion of a sulfur atom into dethiobiotin via a radical-based mechanism. This Clostridium perfringens (strain 13 / Type A) protein is Biotin synthase.